Reading from the N-terminus, the 215-residue chain is Cytochrome b6 (215 aa).

A helical membrane pass occupies residues 32–52; the sequence is IFYCLGGITLTCFLVQVATGF. Residue Cys-35 participates in heme c binding. Heme b contacts are provided by His-86 and His-100. A run of 3 helical transmembrane segments spans residues 90–110, 116–136, and 186–206; these read ASMMVLMMILHVFRVYLTGGF, LTWVTGVILSVITVSFGVTGY, and LHTFVLPLLAAVFMLMHFLMI. Positions 187 and 202 each coordinate heme b.

The protein belongs to the cytochrome b family. PetB subfamily. The 4 large subunits of the cytochrome b6-f complex are cytochrome b6, subunit IV (17 kDa polypeptide, PetD), cytochrome f and the Rieske protein, while the 4 small subunits are PetG, PetL, PetM and PetN. The complex functions as a dimer. Heme b is required as a cofactor. It depends on heme c as a cofactor.

Its subcellular location is the plastid. The protein resides in the chloroplast thylakoid membrane. Component of the cytochrome b6-f complex, which mediates electron transfer between photosystem II (PSII) and photosystem I (PSI), cyclic electron flow around PSI, and state transitions. The chain is Cytochrome b6 from Ostreococcus tauri.